Consider the following 421-residue polypeptide: MNIFNNHLHETDKEIDEIIKHEKLRQNSVIELIASENFVSPAVLEAQGSILTNKYAEGYSGKRFYNGCEEVDKAENLAIERVKKLFNCKYANVQSHSGSQANQAVYLALLQPGDTILGMSLDSGGHLTHGAAPNMSGKWFNAVSYSVNKETYLIDYDEIERLADLHKPKLLIAGFSAYPRNIDFARFREIADKVGAYFMADIAHIAGLVATGEHQSPIPYTHAVTSTTHKTLRGPRGGLILSNDEEIGKKINSALFPGLQGGPLMHIIAAKAVAFLENLQPEYKSYIKQVISNAKALASSLQERGYDILTGGTDNHIVLVDLCKDGITGKLAANSLDRAGITCNKNAIPFDETSPFITSGIRLGTPACTTRGFKEKDFVLVGHMVADILDGLKNNEDNGKAEQKVLTEVTKLIKLFPFYTR.

(6S)-5,6,7,8-tetrahydrofolate-binding positions include leucine 121 and 125–127; that span reads GHL. Lysine 230 is modified (N6-(pyridoxal phosphate)lysine). Residues glutamate 246 and 354–356 each bind (6S)-5,6,7,8-tetrahydrofolate; that span reads SPF.

The protein belongs to the SHMT family. Homodimer. The cofactor is pyridoxal 5'-phosphate.

It localises to the cytoplasm. The catalysed reaction is (6R)-5,10-methylene-5,6,7,8-tetrahydrofolate + glycine + H2O = (6S)-5,6,7,8-tetrahydrofolate + L-serine. Its pathway is one-carbon metabolism; tetrahydrofolate interconversion. The protein operates within amino-acid biosynthesis; glycine biosynthesis; glycine from L-serine: step 1/1. In terms of biological role, catalyzes the reversible interconversion of serine and glycine with tetrahydrofolate (THF) serving as the one-carbon carrier. This reaction serves as the major source of one-carbon groups required for the biosynthesis of purines, thymidylate, methionine, and other important biomolecules. Also exhibits THF-independent aldolase activity toward beta-hydroxyamino acids, producing glycine and aldehydes, via a retro-aldol mechanism. This Rickettsia felis (strain ATCC VR-1525 / URRWXCal2) (Rickettsia azadi) protein is Serine hydroxymethyltransferase.